The chain runs to 170 residues: Non-specific lipid transfer protein GPI-anchored 5 (170 aa).

Positions 1-24 (MKMEMGLVFLTVFMAVMSSTMVSA) are cleaved as a signal peptide. Disulfide bonds link cysteine 28–cysteine 69, cysteine 38–cysteine 53, cysteine 54–cysteine 95, and cysteine 67–cysteine 105. Asparagine 45, asparagine 84, asparagine 124, and asparagine 130 each carry an N-linked (GlcNAc...) asparagine glycan. A disordered region spans residues 105-148 (CNTGGGGGGSTSDSPAESPNSSGPGNGSKTVPVGEGDGPPSSDG). Serine 146 is lipidated: GPI-anchor amidated serine. Positions 147 to 170 (DGSSIKFSFPLIAFFSAVSYMAIF) are cleaved as a propeptide — removed in mature form.

This sequence belongs to the plant LTP family. In terms of tissue distribution, expressed in seedlings, preferentially in the endodermis of hypocotyls and roots, as well as in anthers, sepals and flower tori.

The protein localises to the cell membrane. In terms of biological role, lipid transfer protein involved in seed and ovule maturation and development, probably by regulating the fatty acids homeostasis during suberin and sporopollenin biosynthesis or deposition. Contributes to pre-invasive defense against some non-host powdery mildew pathogens by preventing the penetration of the epidermal cell wall by the fungal agents (e.g. Blumeria graminis f. sp. hordei (Bgh)). This Arabidopsis thaliana (Mouse-ear cress) protein is Non-specific lipid transfer protein GPI-anchored 5.